The primary structure comprises 454 residues: Maintenance of mitochondrial morphology protein 1 (454 aa).

At 1–128 (MSMVIGIGDL…QSSGWGFAHG (128 aa)) the chain is on the lumenal side. Residues 129–149 (LLVGQLSVVAVLAFFIKFFIF) traverse the membrane as a helical segment. At 150-454 (GNSSMARPLM…SESETAVDSN (305 aa)) the chain is on the cytoplasmic side. In terms of domain architecture, SMP-LTD spans 207–430 (QSESLDWFNV…EPRFQLIELP (224 aa)).

Belongs to the MMM1 family. In terms of assembly, homodimer. Component of the ER-mitochondria encounter structure (ERMES) or MDM complex, composed of MMM1, MDM10, MDM12 and MDM34. An MMM1 homodimer associates with one molecule of MDM12 on each side in a pairwise head-to-tail manner, and the SMP-LTD domains of MMM1 and MDM12 generate a continuous hydrophobic tunnel for phospholipid trafficking.

It localises to the endoplasmic reticulum membrane. Functionally, component of the ERMES/MDM complex, which serves as a molecular tether to connect the endoplasmic reticulum (ER) and mitochondria. Components of this complex are involved in the control of mitochondrial shape and protein biogenesis, and function in nonvesicular lipid trafficking between the ER and mitochondria. The MDM12-MMM1 subcomplex functions in the major beta-barrel assembly pathway that is responsible for biogenesis of all outer membrane beta-barrel proteins, and acts in a late step after the SAM complex. The MDM10-MDM12-MMM1 subcomplex further acts in the TOM40-specific pathway after the action of the MDM12-MMM1 complex. Essential for establishing and maintaining the structure of mitochondria and maintenance of mtDNA nucleoids. The sequence is that of Maintenance of mitochondrial morphology protein 1 from Komagataella phaffii (strain GS115 / ATCC 20864) (Yeast).